The chain runs to 705 residues: Prolyl endopeptidase (705 aa).

The N-terminal stretch at 1-20 is a signal peptide; sequence MKYKKLSVAVAAFAFAAVSA. Residues serine 556 and histidine 675 each act as charge relay system in the active site.

This sequence belongs to the peptidase S9A family. Monomer.

It is found in the periplasm. It carries out the reaction Hydrolysis of Pro-|-Xaa &gt;&gt; Ala-|-Xaa in oligopeptides.. Its function is as follows. Cleaves peptide bonds on the C-terminal side of prolyl residues within peptides that are up to approximately 30 amino acids long. Has an absolute requirement for an X-Pro bond in the trans configuration immediately preceding the Pro-Y scissible bond. The chain is Prolyl endopeptidase from Elizabethkingia miricola (Chryseobacterium miricola).